Here is a 508-residue protein sequence, read N- to C-terminus: ATP synthase subunit alpha, mitochondrial (508 aa).

171 to 178 (GDRQTGKT) contacts ATP.

The protein belongs to the ATPase alpha/beta chains family. As to quaternary structure, F-type ATPases have 2 components, CF(1) - the catalytic core - and CF(0) - the membrane proton channel. CF(1) has five subunits: alpha(3), beta(3), gamma(1), delta(1), epsilon(1). CF(0) has three main subunits: a, b and c.

It is found in the mitochondrion. The protein resides in the mitochondrion inner membrane. Its function is as follows. Mitochondrial membrane ATP synthase (F(1)F(0) ATP synthase or Complex V) produces ATP from ADP in the presence of a proton gradient across the membrane which is generated by electron transport complexes of the respiratory chain. F-type ATPases consist of two structural domains, F(1) - containing the extramembraneous catalytic core, and F(0) - containing the membrane proton channel, linked together by a central stalk and a peripheral stalk. During catalysis, ATP synthesis in the catalytic domain of F(1) is coupled via a rotary mechanism of the central stalk subunits to proton translocation. Subunits alpha and beta form the catalytic core in F(1). Rotation of the central stalk against the surrounding alpha(3)beta(3) subunits leads to hydrolysis of ATP in three separate catalytic sites on the beta subunits. Subunit alpha does not bear the catalytic high-affinity ATP-binding sites. This Zea mays (Maize) protein is ATP synthase subunit alpha, mitochondrial (ATPA).